The following is a 584-amino-acid chain: Aspartate--tRNA(Asp/Asn) ligase (584 aa).

An L-aspartate-binding site is contributed by Glu-177. Positions 201-204 (QLFK) are aspartate. Residue Arg-223 coordinates L-aspartate. Residues 223–225 (RDE) and Gln-232 each bind ATP. His-447 contacts L-aspartate. Glu-481 is a binding site for ATP. Arg-488 serves as a coordination point for L-aspartate. Residue 533–536 (GLDR) coordinates ATP.

The protein belongs to the class-II aminoacyl-tRNA synthetase family. Type 1 subfamily. In terms of assembly, homodimer.

The protein resides in the cytoplasm. The catalysed reaction is tRNA(Asx) + L-aspartate + ATP = L-aspartyl-tRNA(Asx) + AMP + diphosphate. Aspartyl-tRNA synthetase with relaxed tRNA specificity since it is able to aspartylate not only its cognate tRNA(Asp) but also tRNA(Asn). Reaction proceeds in two steps: L-aspartate is first activated by ATP to form Asp-AMP and then transferred to the acceptor end of tRNA(Asp/Asn). This is Aspartate--tRNA(Asp/Asn) ligase from Chlamydia abortus (strain DSM 27085 / S26/3) (Chlamydophila abortus).